A 256-amino-acid polypeptide reads, in one-letter code: Thiazole synthase (256 aa).

The active-site Schiff-base intermediate with DXP is lysine 99. 1-deoxy-D-xylulose 5-phosphate-binding positions include glycine 160, 186-187 (AG), and 208-209 (NT).

This sequence belongs to the ThiG family. Homotetramer. Forms heterodimers with either ThiH or ThiS.

The protein localises to the cytoplasm. The enzyme catalyses [ThiS sulfur-carrier protein]-C-terminal-Gly-aminoethanethioate + 2-iminoacetate + 1-deoxy-D-xylulose 5-phosphate = [ThiS sulfur-carrier protein]-C-terminal Gly-Gly + 2-[(2R,5Z)-2-carboxy-4-methylthiazol-5(2H)-ylidene]ethyl phosphate + 2 H2O + H(+). It functions in the pathway cofactor biosynthesis; thiamine diphosphate biosynthesis. In terms of biological role, catalyzes the rearrangement of 1-deoxy-D-xylulose 5-phosphate (DXP) to produce the thiazole phosphate moiety of thiamine. Sulfur is provided by the thiocarboxylate moiety of the carrier protein ThiS. In vitro, sulfur can be provided by H(2)S. The sequence is that of Thiazole synthase from Neorickettsia sennetsu (strain ATCC VR-367 / Miyayama) (Ehrlichia sennetsu).